The chain runs to 418 residues: Triacylglycerol lipase 2 (418 aa).

A signal peptide spans 1-31 (MAGSVMVPSVSIGLALSVLIFFALSLKTLEA). A glycan (N-linked (GlcNAc...) asparagine) is linked at asparagine 158. Catalysis depends on serine 190, which acts as the Nucleophile. 2 N-linked (GlcNAc...) asparagine glycosylation sites follow: asparagine 286 and asparagine 342. Residues aspartate 360 and histidine 393 each act as charge relay system in the active site.

The protein belongs to the AB hydrolase superfamily. Lipase family.

The protein localises to the secreted. The catalysed reaction is a triacylglycerol + H2O = a diacylglycerol + a fatty acid + H(+). Its function is as follows. Triacylglycerol (TAG) lipase. May be involved for TAG storage breakdown during seed germination. The polypeptide is Triacylglycerol lipase 2 (LIP2) (Arabidopsis thaliana (Mouse-ear cress)).